A 316-amino-acid polypeptide reads, in one-letter code: Chorismate mutase 3, chloroplastic (316 aa).

The transit peptide at 1 to 47 (MEAKLLKPAFYNSPNLNLTNSSRLISRLSIWNDKSKVGLSSGSLFLR) directs the protein to the chloroplast. Position 62 (arginine 62) interacts with L-phenylalanine. Residues 62 to 316 (RVDESEYLKL…QIEYLLRRLD (255 aa)) enclose the Chorismate mutase domain. L-tyrosine is bound by residues arginine 133 and 194–197 (NCGS). 194–197 (NCGS) contributes to the L-phenylalanine binding site.

Homodimer. As to expression, expressed in roots, stems, cauline leaves, flowers and siliques, and at lower levels in rosette leaves.

The protein localises to the plastid. It is found in the chloroplast. It catalyses the reaction chorismate = prephenate. The protein operates within metabolic intermediate biosynthesis; prephenate biosynthesis; prephenate from chorismate: step 1/1. Allosterically inhibited by tyrosine and phenylalanine. According to another report, seems not to be repressed by tyrosine and phenylalanine. Activated by tryptophan, cysteine and histidine. In terms of biological role, may play a role in chloroplast biogenesis. The sequence is that of Chorismate mutase 3, chloroplastic from Arabidopsis thaliana (Mouse-ear cress).